Consider the following 721-residue polypeptide: Solute carrier family 12 member 8 (721 aa).

The next 11 membrane-spanning stretches (helical) occupy residues 53–73 (FGTW…VVLF), 84–104 (GVLL…VTVL), 115–135 (IGSG…VGGT), 136–156 (IGVL…TGFA), 174–194 (ISLA…KWII), 196–216 (LQLL…IGSF), 247–267 (FFTV…GFNM), 283–303 (LAAI…LGAI), 321–341 (LVGG…CMGG), 374–394 (PVAA…IGQV), and 397–417 (LAPI…YSYF). 2 disordered regions span residues 473–505 (PNHT…KQTL) and 533–580 (NESQ…STVA). Positions 553–565 (TESDEPDSEEDVD) are enriched in acidic residues. 2 consecutive transmembrane segments (helical) span residues 606–626 (FLGA…YALV) and 628–648 (LGVA…LNPG).

The protein belongs to the SLC12A transporter family.

The protein localises to the membrane. Functionally, cation/chloride cotransporter. This is Solute carrier family 12 member 8 (slc12a8) from Xenopus laevis (African clawed frog).